A 485-amino-acid polypeptide reads, in one-letter code: Cysteine--tRNA ligase (485 aa).

Cysteine 27 contributes to the Zn(2+) binding site. The short motif at 29–39 is the 'HIGH' region element; it reads ITAYDLCHIGH. Zn(2+) is bound by residues cysteine 208, histidine 233, and glutamate 237. The 'KMSKS' region signature appears at 265–269; it reads KMSKS. Position 268 (lysine 268) interacts with ATP.

The protein belongs to the class-I aminoacyl-tRNA synthetase family. As to quaternary structure, monomer. Requires Zn(2+) as cofactor.

The protein resides in the cytoplasm. The catalysed reaction is tRNA(Cys) + L-cysteine + ATP = L-cysteinyl-tRNA(Cys) + AMP + diphosphate. This chain is Cysteine--tRNA ligase, found in Nitratidesulfovibrio vulgaris (strain DP4) (Desulfovibrio vulgaris).